Consider the following 187-residue polypeptide: Probable nicotinate-nucleotide adenylyltransferase (187 aa).

It belongs to the NadD family.

It carries out the reaction nicotinate beta-D-ribonucleotide + ATP + H(+) = deamido-NAD(+) + diphosphate. It functions in the pathway cofactor biosynthesis; NAD(+) biosynthesis; deamido-NAD(+) from nicotinate D-ribonucleotide: step 1/1. Catalyzes the reversible adenylation of nicotinate mononucleotide (NaMN) to nicotinic acid adenine dinucleotide (NaAD). The sequence is that of Probable nicotinate-nucleotide adenylyltransferase from Anaeromyxobacter dehalogenans (strain 2CP-C).